A 387-amino-acid polypeptide reads, in one-letter code: MTQPNNYKIGTNVIHAGQSADKNTGAVIVPISLSTTFLQPSPGVLHSEYDYSRSGNPTRKAFEECIAACENAKYALSFASGLATLTTITHLLKSGDEVISIDDVYGGTRRYFTRVAANFDLKFSFVDLSTLDDLKNAFTDKTRLVWIETPTNPLLKVADIKAVADYVHSRGATLVVDNTFMSPYFQNPLDLGADIVMHSVTKYINGHSDCVMGVLATNNDELYAKLKFLQNSIGAVPSPFDCFLALRGLKTLHVRMEAHQKNAFAICNFLEKHPKVERVIYPGLPSHPQHEICKRQMKGYGGMVVFFVKGSIDQSRSFLENIKLFALAESLGGVESLIELPSVMTHASVPAEERAKLGISDTLIRLSVGIEDINDLLADISQALDKC.

Substrate is bound by residues Arg53, Tyr105, and Arg110. Lys202 is modified (N6-(pyridoxal phosphate)lysine). Substrate is bound at residue Glu329.

Belongs to the trans-sulfuration enzymes family. As to quaternary structure, homotetramer. Interacts with CALM in a calcium-dependent manner. It depends on pyridoxal 5'-phosphate as a cofactor.

The protein localises to the cytoplasm. It catalyses the reaction L,L-cystathionine + H2O = 2-oxobutanoate + L-cysteine + NH4(+). The enzyme catalyses L-cysteine + H2O = hydrogen sulfide + pyruvate + NH4(+) + H(+). It carries out the reaction L-homocysteine + H2O = 2-oxobutanoate + hydrogen sulfide + NH4(+) + H(+). The catalysed reaction is L-homoserine = 2-oxobutanoate + NH4(+). Its pathway is amino-acid biosynthesis; L-cysteine biosynthesis; L-cysteine from L-homocysteine and L-serine: step 2/2. Functionally, catalyzes the last step in the trans-sulfuration pathway from L-methionine to L-cysteine in a pyridoxal-5'-phosphate (PLP)-dependent manner, which consists on cleaving the L,L-cystathionine molecule into L-cysteine, ammonia and 2-oxobutanoate. Part of the L-cysteine derived from the trans-sulfuration pathway is utilized for biosynthesis of the ubiquitous antioxidant glutathione. Besides its role in the conversion of L-cystathionine into L-cysteine, it utilizes L-cysteine and L-homocysteine as substrates (at much lower rates than L,L-cystathionine) to produce the endogenous gaseous signaling molecule hydrogen sulfide (H2S). This is Cystathionine gamma-lyase (cysA) from Dictyostelium discoideum (Social amoeba).